A 418-amino-acid chain; its full sequence is Glutamyl-tRNA reductase (418 aa).

Residues 49-52 (TCNR), serine 107, 112-114 (EPQ), and glutamine 118 each bind substrate. The active-site Nucleophile is cysteine 50. 187 to 192 (GAGETI) provides a ligand contact to NADP(+).

This sequence belongs to the glutamyl-tRNA reductase family. As to quaternary structure, homodimer.

It carries out the reaction (S)-4-amino-5-oxopentanoate + tRNA(Glu) + NADP(+) = L-glutamyl-tRNA(Glu) + NADPH + H(+). It participates in porphyrin-containing compound metabolism; protoporphyrin-IX biosynthesis; 5-aminolevulinate from L-glutamyl-tRNA(Glu): step 1/2. Catalyzes the NADPH-dependent reduction of glutamyl-tRNA(Glu) to glutamate 1-semialdehyde (GSA). In Vibrio parahaemolyticus serotype O3:K6 (strain RIMD 2210633), this protein is Glutamyl-tRNA reductase.